A 131-amino-acid polypeptide reads, in one-letter code: Small ribosomal subunit protein uS8 (131 aa).

Belongs to the universal ribosomal protein uS8 family. In terms of assembly, part of the 30S ribosomal subunit. Contacts proteins S5 and S12.

Functionally, one of the primary rRNA binding proteins, it binds directly to 16S rRNA central domain where it helps coordinate assembly of the platform of the 30S subunit. In Acinetobacter baylyi (strain ATCC 33305 / BD413 / ADP1), this protein is Small ribosomal subunit protein uS8.